Here is a 220-residue protein sequence, read N- to C-terminus: Phosphoenolpyruvate guanylyltransferase (220 aa).

3 residues coordinate phosphoenolpyruvate: T154, G169, and S172.

Belongs to the CofC family.

It catalyses the reaction phosphoenolpyruvate + GTP + H(+) = enolpyruvoyl-2-diphospho-5'-guanosine + diphosphate. It functions in the pathway cofactor biosynthesis; coenzyme F420 biosynthesis. Its function is as follows. Guanylyltransferase that catalyzes the activation of phosphoenolpyruvate (PEP) as enolpyruvoyl-2-diphospho-5'-guanosine, via the condensation of PEP with GTP. It is involved in the biosynthesis of coenzyme F420, a hydride carrier cofactor. The polypeptide is Phosphoenolpyruvate guanylyltransferase (Mycolicibacterium paratuberculosis (strain ATCC BAA-968 / K-10) (Mycobacterium paratuberculosis)).